Here is a 327-residue protein sequence, read N- to C-terminus: Cytochrome f (327 aa).

The N-terminal stretch at 1-24 (MKRIYLALCALLLLLGTGSRPAAA) is a signal peptide. Heme contacts are provided by tyrosine 25, cysteine 45, cysteine 48, and histidine 49. Residues 293–313 (VKWLVAFLAAVAITQLLLVLK) form a helical membrane-spanning segment.

The protein belongs to the cytochrome f family. In terms of assembly, the 4 large subunits of the cytochrome b6-f complex are cytochrome b6, subunit IV (17 kDa polypeptide, PetD), cytochrome f and the Rieske protein, while the 4 small subunits are PetG, PetL, PetM and PetN. The complex functions as a dimer. It depends on heme as a cofactor.

The protein localises to the cellular thylakoid membrane. In terms of biological role, component of the cytochrome b6-f complex, which mediates electron transfer between photosystem II (PSII) and photosystem I (PSI), cyclic electron flow around PSI, and state transitions. In Synechococcus sp. (strain JA-3-3Ab) (Cyanobacteria bacterium Yellowstone A-Prime), this protein is Cytochrome f.